A 704-amino-acid chain; its full sequence is SH3KBP1-binding protein 1 (704 aa).

Alanine 2 carries the N-acetylalanine modification. In terms of domain architecture, BTB spans 19 to 88; that stretch reads EVIHLNVGGK…LRTKELDPRG (70 aa). The interval 145 to 165 is disordered; that stretch reads LVGPQQAGGRPAPVRRSNTMP. The residue at position 163 (threonine 163) is a Phosphothreonine. WD repeat units follow at residues 233–280, 283–322, 324–359, 428–466, and 548–586; these read RLDW…GGSE, VFHL…WQVQ, VQPI…LRMK, VHRS…GMIS, and LECE…DGLG. Residues 611–644 show a composition bias toward low complexity; sequence ASSRGSLPSPSPRTSLTSLHSAFSNTSLSSRRGS. A disordered region spans residues 611–704; sequence ASSRGSLPSP…PKTKLNETSF (94 aa). The short motif at 618-623 is the PXXXPR element; that stretch reads PSPSPR. Phosphoserine is present on residues serine 644 and serine 646. Residues 678–683 carry the PXXXPR motif; sequence PTPAPR.

Belongs to the KCTD3 family. Monomer. Interacts with CUL3; interaction is direct and forms a 5:5 heterodecamer. Interacts (via PXXXPR motifs) with SH3KBP1 (via SH3 domains). Directly interacts with cathepsin B/CTSB.

The protein localises to the lysosome. In terms of biological role, inhibits CBL-SH3KBP1 complex mediated down-regulation of EGFR signaling by sequestration of SH3KBP1. Binds to SH3KBP1 and prevents its interaction with CBL and inhibits translocation of SH3KBP1 to EGFR containing vesicles upon EGF stimulation. This is SH3KBP1-binding protein 1 (SHKBP1) from Bos taurus (Bovine).